The chain runs to 956 residues: uncharacterized protein (956 aa).

Residues 918–942 adopt a coiled-coil conformation; it reads NSINEAIEKLNEAADAYQAIIDQQK.

This is an uncharacterized protein from Acanthamoeba polyphaga (Amoeba).